A 2051-amino-acid polypeptide reads, in one-letter code: Fatty acid synthase subunit beta (2051 aa).

Met1 is modified (N-acetylmethionine). Residues 1 to 468 (MDAYSTRPLT…VYDTFDGSDL (468 aa)) are acetyltransferase. Ser274 acts as the For acetyltransferase activity in catalysis. The segment at 480–868 (VDCIIRLPVK…TRGVMLWKEF (389 aa)) is enoyl reductase. Thr733 carries the phosphothreonine modification. Ser1121 is modified (phosphoserine). Residues 1144–1626 (GSEINWRHAS…LPNTALKTSI (483 aa)) are dehydratase. Lys1364 is covalently cross-linked (Glycyl lysine isopeptide (Lys-Gly) (interchain with G-Cter in ubiquitin)). One can recognise a MaoC-like domain in the interval 1523-1648 (NGSTLEQKVN…KFETRNEDDV (126 aa)). Residues 1627–1845 (QHVGMINGRK…MTMQVAVPRD (219 aa)) form a malonyl/palmitoyl transferase region. Ser1808 (for malonyltransferase activity) is an active-site residue.

Belongs to the fungal fatty acid synthetase subunit beta family. In terms of assembly, [Alpha(6)beta(6)] hexamers of two multifunctional subunits (alpha and beta).

The catalysed reaction is acetyl-CoA + n malonyl-CoA + 2n NADPH + 4n H(+) = a long-chain-acyl-CoA + n CoA + n CO2 + 2n NADP(+).. The enzyme catalyses holo-[ACP] + acetyl-CoA = acetyl-[ACP] + CoA. It carries out the reaction holo-[ACP] + malonyl-CoA = malonyl-[ACP] + CoA. It catalyses the reaction a (3R)-hydroxyacyl-[ACP] = a (2E)-enoyl-[ACP] + H2O. The catalysed reaction is a 2,3-saturated acyl-[ACP] + NAD(+) = a (2E)-enoyl-[ACP] + NADH + H(+). The enzyme catalyses (9Z)-octadecenoyl-[ACP] + H2O = (9Z)-octadecenoate + holo-[ACP] + H(+). Its function is as follows. Fatty acid synthetase catalyzes the formation of long-chain fatty acids from acetyl-CoA, malonyl-CoA and NADPH. The beta subunit contains domains for: [acyl-carrier-protein] acetyltransferase and malonyltransferase, S-acyl fatty acid synthase thioesterase, enoyl-[acyl-carrier-protein] reductase, and 3-hydroxypalmitoyl-[acyl-carrier-protein] dehydratase. The chain is Fatty acid synthase subunit beta (FAS1) from Saccharomyces cerevisiae (strain ATCC 204508 / S288c) (Baker's yeast).